Consider the following 491-residue polypeptide: MDNGSNQLHVLFLPYFATGHIIPLVNAARLFVFHAGVKVTILTTHHNASLFRSTIDNDVEDGHSVISIHTLRFPSTEVGLPEGIENFSSASSPELAGKVFYAIYLLQKPMEDKIREIHPDCIFSDMYLPWTVNIALELKIPRLLFNQSSYMYNSILYNLRLYKPHKSKTITSTDSISVPGLPDKIEFKLSQLTDDLIKPEDEKNAFDELLDRTRESEDRSYGIVHDTFYELEPAYADYYQKVKKTKCWQIGPISHFSSKLFRRKELINAVDESNSCAIVEWLNEQEHKSVLYVSFGSVVRFPEAQLTEIAKALEASSIPFIWVVKKDQSAETTCLLEEEKLKNKGLIIRGWAPQLTILDHSAVGGFMTHCGWNSILEAIIAGVPLVTWPVFAEQFYNEKLVEVMGLGVKVGAEVHESNGGVEISSLVIESEKIKEAIEKLMDDSKESQKIREKVIGMSEMAKNAVEEGGSSWNNLTALIDDIKNFTSTTNV.

His-20 functions as the Proton acceptor in the catalytic mechanism. An anthocyanidin is bound at residue His-20. Residue Asp-125 is the Charge relay of the active site. Positions 352, 354, 369, 372, 373, 374, and 377 each coordinate UDP-alpha-D-glucose. Position 392 (Ala-392) interacts with an anthocyanidin. Glu-393 and Gln-394 together coordinate UDP-alpha-D-glucose.

It belongs to the UDP-glycosyltransferase family. As to expression, expressed in roots, stems and leaves.

The enzyme catalyses nuatigenin + UDP-alpha-D-glucose = nuatigenin 3-beta-D-glucopyranoside + UDP + H(+). It catalyses the reaction diosgenin + UDP-alpha-D-glucose = diosgenin 3-O-beta-D-glucoside + UDP + H(+). It carries out the reaction tigogenin + UDP-alpha-D-glucose = tigogenin 3-O-beta-D-glucopyranoside + UDP + H(+). The catalysed reaction is solasodine + UDP-alpha-D-glucose = solasodine 3-beta-D-glucoside + UDP + H(+). The enzyme catalyses solanidine + UDP-alpha-D-glucose = solanidine 3-O-beta-D-glucopyranoside + UDP + H(+). It catalyses the reaction tomatidine + UDP-alpha-D-glucose = tomatidine 3-O-beta-D-glucopyranoside + UDP + H(+). Its function is as follows. Glucosyltransferase involved in steroid saponin biosynthesis. Catalyzes the 3-O-glucosylation of steroidal sapogenins, such as diosgenin, nuatigenin and tigogenin. Can glucosylate steroidal alkaloids, such as solanidine, solasodine and tomatidine. This chain is Nuatigenin 3-beta-glucosyltransferase, found in Solanum aculeatissimum (Dutch eggplant).